The primary structure comprises 298 residues: ATP synthase gamma chain (298 aa).

This sequence belongs to the ATPase gamma chain family. As to quaternary structure, F-type ATPases have 2 components, CF(1) - the catalytic core - and CF(0) - the membrane proton channel. CF(1) has five subunits: alpha(3), beta(3), gamma(1), delta(1), epsilon(1). CF(0) has three main subunits: a, b and c.

The protein localises to the cell inner membrane. Produces ATP from ADP in the presence of a proton gradient across the membrane. The gamma chain is believed to be important in regulating ATPase activity and the flow of protons through the CF(0) complex. The protein is ATP synthase gamma chain of Francisella tularensis subsp. tularensis (strain WY96-3418).